Here is a 481-residue protein sequence, read N- to C-terminus: GTPase Der (481 aa).

EngA-type G domains lie at 3–166 (PVVA…ESDF) and 194–367 (IKLA…MSAT). Residues 9–16 (GRPNVGKS), 56–60 (DTGGI), 118–121 (NKVD), 200–207 (GKPNVGKS), 247–251 (DTAGV), and 312–315 (NKWD) each bind GTP. One can recognise a KH-like domain in the interval 368 to 452 (KRINTALLTQ…PIKIEFREGN (85 aa)).

It belongs to the TRAFAC class TrmE-Era-EngA-EngB-Septin-like GTPase superfamily. EngA (Der) GTPase family. Associates with the 50S ribosomal subunit.

Functionally, GTPase that plays an essential role in the late steps of ribosome biogenesis. The polypeptide is GTPase Der (Alteromonas mediterranea (strain DSM 17117 / CIP 110805 / LMG 28347 / Deep ecotype)).